The sequence spans 236 residues: Phosphoribosylaminoimidazole-succinocarboxamide synthase (236 aa).

Belongs to the SAICAR synthetase family.

The enzyme catalyses 5-amino-1-(5-phospho-D-ribosyl)imidazole-4-carboxylate + L-aspartate + ATP = (2S)-2-[5-amino-1-(5-phospho-beta-D-ribosyl)imidazole-4-carboxamido]succinate + ADP + phosphate + 2 H(+). It functions in the pathway purine metabolism; IMP biosynthesis via de novo pathway; 5-amino-1-(5-phospho-D-ribosyl)imidazole-4-carboxamide from 5-amino-1-(5-phospho-D-ribosyl)imidazole-4-carboxylate: step 1/2. This chain is Phosphoribosylaminoimidazole-succinocarboxamide synthase, found in Campylobacter concisus (strain 13826).